Consider the following 210-residue polypeptide: Transcriptional regulator GfcR (210 aa).

Residues Val39–Ile60 form a disordered region. The segment covering Pro48–Ile60 has biased composition (basic and acidic residues).

This sequence belongs to the purine/pyrimidine phosphoribosyltransferase family. GfcR subfamily.

With respect to regulation, interaction with effectors modulates GfcR activity. 2-keto-3-deoxy-6-phosphogluconate (KDPG), fructose-1,6-bisphosphate (FBP), 2-keto-3-deoxy-6-phosphogalactonate (KDPGal) and glycerol-3-phosphate (G3P), which are intermediates of sugar and glycerol degradation pathways, can act as inducer molecules. DNA-binding transcriptional regulator that functions as a regulator of central sugar catabolic pathways. Is both a local regulator of specific steps in the pathways for D-glucose and D-fructose degradation and a global regulator of hexose catabolism. In the presence of D-glucose, activates expression of the gene encoding the gluconate dehydratase (gad), which is involved in D-glucose catabolism via the semiphosphorylative Entner-Doudoroff (spED) pathway. In the presence of D-fructose, activates expression of the genes encoding the PTS system EIIC component (ptfC) and the fructose-1,6-bisphosphate aldolase (fba), which are involved in D-fructose uptake and degradation via the modified Embden-Meyerhof pathway. In addition, in the presence of D-glucose, D-fructose, D-galactose or glycerol, it activates expression of the genes encoding glyceraldehyde-3-phosphate dehydrogenase (gap) and pyruvate kinase (pykA), enzymes common to all four degradation pathways. Acts by binding directly to the promoter region of the regulated genes. The sequence is that of Transcriptional regulator GfcR from Haloferax volcanii (strain ATCC 29605 / DSM 3757 / JCM 8879 / NBRC 14742 / NCIMB 2012 / VKM B-1768 / DS2) (Halobacterium volcanii).